A 250-amino-acid polypeptide reads, in one-letter code: MSRLLLNCDIGESFGNWTLGLDAEVMPFIDCANIACGFHAGDPGIMRKTVALALANGVRIGAHPAYQDLAGFGRRSMSYSPEEIQDLLHYQVGALDGICRAQGGRVEYVKPHGAMYNDMMAKPAQLRAVIQAVAAYDPQLPLMLMATRDNSAAQALGDEYGVTLWFEAFADRAYDNAGHLVSRQLPGAVHHDAQTILQQALTIARGEPLAASDGSALLLHANTLCVHGDNASSVAAVQRIREALNQQSGL.

Belongs to the LamB/PxpA family. In terms of assembly, forms a complex composed of PxpA, PxpB and PxpC.

The enzyme catalyses 5-oxo-L-proline + ATP + 2 H2O = L-glutamate + ADP + phosphate + H(+). In terms of biological role, catalyzes the cleavage of 5-oxoproline to form L-glutamate coupled to the hydrolysis of ATP to ADP and inorganic phosphate. The polypeptide is 5-oxoprolinase subunit A (Pseudomonas fluorescens (strain ATCC BAA-477 / NRRL B-23932 / Pf-5)).